The primary structure comprises 222 residues: Triosephosphate isomerase (222 aa).

9–11 contacts substrate; it reads NYK. Histidine 93 (electrophile) is an active-site residue. Glutamate 141 serves as the catalytic Proton acceptor. Substrate is bound by residues isoleucine 146, glycine 181, and 202 to 203; that span reads AS.

Belongs to the triosephosphate isomerase family. In terms of assembly, homotetramer; dimer of dimers.

The protein resides in the cytoplasm. The catalysed reaction is D-glyceraldehyde 3-phosphate = dihydroxyacetone phosphate. Its pathway is carbohydrate biosynthesis; gluconeogenesis. It functions in the pathway carbohydrate degradation; glycolysis; D-glyceraldehyde 3-phosphate from glycerone phosphate: step 1/1. In terms of biological role, involved in the gluconeogenesis. Catalyzes stereospecifically the conversion of dihydroxyacetone phosphate (DHAP) to D-glyceraldehyde-3-phosphate (G3P). This chain is Triosephosphate isomerase, found in Methanosarcina mazei (strain ATCC BAA-159 / DSM 3647 / Goe1 / Go1 / JCM 11833 / OCM 88) (Methanosarcina frisia).